A 393-amino-acid chain; its full sequence is NAD(P)H-quinone oxidoreductase subunit H, chloroplastic (393 aa).

This sequence belongs to the complex I 49 kDa subunit family. NDH is composed of at least 16 different subunits, 5 of which are encoded in the nucleus.

The protein resides in the plastid. The protein localises to the chloroplast thylakoid membrane. The enzyme catalyses a plastoquinone + NADH + (n+1) H(+)(in) = a plastoquinol + NAD(+) + n H(+)(out). The catalysed reaction is a plastoquinone + NADPH + (n+1) H(+)(in) = a plastoquinol + NADP(+) + n H(+)(out). Functionally, NDH shuttles electrons from NAD(P)H:plastoquinone, via FMN and iron-sulfur (Fe-S) centers, to quinones in the photosynthetic chain and possibly in a chloroplast respiratory chain. The immediate electron acceptor for the enzyme in this species is believed to be plastoquinone. Couples the redox reaction to proton translocation, and thus conserves the redox energy in a proton gradient. The chain is NAD(P)H-quinone oxidoreductase subunit H, chloroplastic from Agrostis stolonifera (Creeping bentgrass).